We begin with the raw amino-acid sequence, 692 residues long: Methionine--tRNA ligase (692 aa).

The 'HIGH' region signature appears at 12–22; the sequence is PYANGSFHIGH. Zn(2+)-binding residues include cysteine 143, cysteine 146, cysteine 156, and cysteine 159. The 'KMSKS' region signature appears at 341–345; that stretch reads KMSKS. Position 344 (lysine 344) interacts with ATP. In terms of domain architecture, tRNA-binding spans 586–692; the sequence is DFAKIDLRIA…PGAQPGMRVR (107 aa).

Belongs to the class-I aminoacyl-tRNA synthetase family. MetG type 1 subfamily. Homodimer. It depends on Zn(2+) as a cofactor.

The protein resides in the cytoplasm. The enzyme catalyses tRNA(Met) + L-methionine + ATP = L-methionyl-tRNA(Met) + AMP + diphosphate. Its function is as follows. Is required not only for elongation of protein synthesis but also for the initiation of all mRNA translation through initiator tRNA(fMet) aminoacylation. This Bordetella parapertussis (strain 12822 / ATCC BAA-587 / NCTC 13253) protein is Methionine--tRNA ligase.